A 671-amino-acid chain; its full sequence is Solute carrier family 5 member 4 (671 aa).

The Cytoplasmic portion of the chain corresponds to 1 to 38 (MPAMGTALPRAMASTASVSTSTGSSELSSLSDNINNPA). The chain crosses the membrane as a helical span at residues 39–59 (DISVIVIYFVVVMAVGVWAMV). At 60–65 (KTNRST) the chain is on the extracellular side. A helical membrane pass occupies residues 66 to 86 (VGGFFLAGRSMTWWPMGASLF). Over 87–89 (ASN) the chain is Cytoplasmic. The chain crosses the membrane as a helical span at residues 90–110 (IGSGHFVGLAGTGAATGIAVT). The Extracellular portion of the chain corresponds to 111–116 (AFESHS). A helical transmembrane segment spans residues 117–137 (FALLLVLGWFFVPIYIKAGVM). The Cytoplasmic segment spans residues 138–159 (TMPEYLRKRFGGKRLQIYLSVL). Residues 160-180 (SLFICVILTISADIFSGAIFI) form a helical membrane-spanning segment. Residue Lys-181 is a topological domain, extracellular. A helical membrane pass occupies residues 182 to 202 (LALGLDLYLAIFILLAITAVF). At 203 to 218 (TITGGLASVIYTDTLQ) the chain is on the cytoplasmic side. Residues 219–239 (AIIMLVGSFILMIYAFVEVGG) form a helical membrane-spanning segment. The Extracellular portion of the chain corresponds to 240–288 (YESFTEKYMNAIPSVVEGDNLTISPKCYTPQPDSFHIFRDAVTGDIPWP). The helical transmembrane segment at 289 to 309 (GTAFGMPITALWYWCINQVIV) threads the bilayer. Topologically, residues 310-324 (QRCLCGKNMSHVKAA) are cytoplasmic. Residues 325 to 345 (CIVCGYLKLLPIFFMVMPGMI) form a helical membrane-spanning segment. The Extracellular portion of the chain corresponds to 346-378 (SRILYTDMVACVVPSECVKQCGVDVGCTNYAYP). Residues 379-399 (MLVLKLMPMGLRGLMLSVMLA) form a helical membrane-spanning segment. Topologically, residues 400 to 434 (SLMSSLTSIFNSASTLFTMDLYTKIRKKASERELL) are cytoplasmic. The chain crosses the membrane as a helical span at residues 435 to 455 (IAGRLFVSVLIVTSILWVPIV). At 456–467 (EVSQGGQLIHYT) the chain is on the extracellular side. The chain crosses the membrane as a helical span at residues 468-488 (EAISSYLGPPIAAVFLVAIFC). The Cytoplasmic segment spans residues 489-494 (KRVNEQ). The helical transmembrane segment at 495 to 515 (GAFWGLMVGLVLGLIRMIAEF) threads the bilayer. Topologically, residues 516–537 (SYGTGSCLAPSSCPKVICGVHY) are extracellular. A helical membrane pass occupies residues 538 to 558 (LYYAIILFFVSILVILGVSYL). The Cytoplasmic portion of the chain corresponds to 559–650 (TKPIPDVHLY…DTSEKPFWRT (92 aa)). Residues 583–593 (DLDAEDREENE) are compositionally biased toward acidic residues. Residues 583–604 (DLDAEDREENEADARTEEDQTE) form a disordered region. The span at 594 to 604 (ADARTEEDQTE) shows a compositional bias: basic and acidic residues. The chain crosses the membrane as a helical span at residues 651-671 (VVNVNVIVLLAVAAFFYGYFA).

Belongs to the sodium:solute symporter (SSF) (TC 2.A.21) family.

It localises to the cell membrane. Its function is as follows. Generates D-glucose-induced depolarization in a pH-dependent and Na(+)-independent manner, with activity in acidic conditions (pH 5) but not neutral conditions. The chain is Solute carrier family 5 member 4 from Rattus norvegicus (Rat).